We begin with the raw amino-acid sequence, 427 residues long: Glutamyl-tRNA reductase (427 aa).

Substrate is bound by residues T49 to R52, S109, E114 to Q116, and Q120. Residue C50 is the Nucleophile of the active site. Residue G188–A193 coordinates NADP(+).

The protein belongs to the glutamyl-tRNA reductase family. As to quaternary structure, homodimer.

It catalyses the reaction (S)-4-amino-5-oxopentanoate + tRNA(Glu) + NADP(+) = L-glutamyl-tRNA(Glu) + NADPH + H(+). It functions in the pathway porphyrin-containing compound metabolism; protoporphyrin-IX biosynthesis; 5-aminolevulinate from L-glutamyl-tRNA(Glu): step 1/2. Its pathway is porphyrin-containing compound metabolism; chlorophyll biosynthesis. Feedback inhibition by heme. Catalyzes the NADPH-dependent reduction of glutamyl-tRNA(Glu) to glutamate 1-semialdehyde (GSA). The sequence is that of Glutamyl-tRNA reductase from Synechocystis sp. (strain ATCC 27184 / PCC 6803 / Kazusa).